The sequence spans 745 residues: Inhibitor of nuclear factor kappa-B kinase subunit alpha (745 aa).

One can recognise a Protein kinase domain in the interval 15–300; the sequence is WEMRERLGTG…IDLTLKQPRC (286 aa). Residues 21-29 and Lys44 each bind ATP; that span reads LGTGGFGNV. Residue Thr23 is modified to Phosphothreonine; by PKB/AKT1 and SGK1. Asp144 functions as the Proton acceptor in the catalytic mechanism. Phosphoserine; by MAP3K14 is present on Ser176. Residue Ser180 is modified to Phosphoserine; by SGK1. Positions 455-476 are leucine-zipper; sequence LLRYNANLTKMKNTLISASQQL. Residues 738 to 743 form an NEMO-binding region; the sequence is LDWSWL.

It belongs to the protein kinase superfamily. Ser/Thr protein kinase family. I-kappa-B kinase subfamily. Component of the I-kappa-B-kinase (IKK) core complex consisting of CHUK, IKBKB and IKBKG; probably four alpha/CHUK-beta/IKBKB dimers are associated with four gamma/IKBKG subunits. The IKK core complex seems to associate with regulatory or adapter proteins to form a IKK-signalosome holo-complex. The IKK complex associates with TERF2IP/RAP1, leading to promote IKK-mediated phosphorylation of RELA/p65. Part of a complex composed of NCOA2, NCOA3, CHUK/IKKA, IKBKB, IKBKG and CREBBP. Part of a 70-90 kDa complex at least consisting of CHUK/IKKA, IKBKB, NFKBIA, RELA, ELP1 and MAP3K14. Directly interacts with TRPC4AP. May interact with TRAF2. Interacts with NALP2. May interact with MAVS/IPS1. Interacts with ARRB1 and ARRB2. Interacts with NLRC5; prevents CHUK phosphorylation and kinase activity. Interacts with PIAS1; this interaction induces PIAS1 phosphorylation. Interacts with ZNF268 isoform 2; the interaction is further increased in a TNF-alpha-dependent manner. Interacts with LRRC14. Interacts with SASH1. Directly interacts with DDX3X after the physiological activation of the TLR7 and TLR8 pathways; this interaction enhances CHUK autophosphorylation. Post-translationally, ubiquitinated by TRIM56 via 'Lys-63'-linked ubiquitination, promoting activation of CHUK/IKKA. In terms of processing, phosphorylated by MAP3K14/NIK, AKT and to a lesser extent by MEKK1, and dephosphorylated by PP2A. Autophosphorylated. In terms of tissue distribution, ubiquitous only for isoform 1, isoforms 2 and 3 are expressed predominantly in brain and T-lymphocytes.

The protein resides in the cytoplasm. The protein localises to the nucleus. It carries out the reaction L-seryl-[I-kappa-B protein] + ATP = O-phospho-L-seryl-[I-kappa-B protein] + ADP + H(+). Activated when phosphorylated and inactivated when dephosphorylated. Its function is as follows. Serine kinase that plays an essential role in the NF-kappa-B signaling pathway which is activated by multiple stimuli such as inflammatory cytokines, bacterial or viral products, DNA damages or other cellular stresses. Acts as a part of the canonical IKK complex in the conventional pathway of NF-kappa-B activation and phosphorylates inhibitors of NF-kappa-B on serine residues. These modifications allow polyubiquitination of the inhibitors and subsequent degradation by the proteasome. In turn, free NF-kappa-B is translocated into the nucleus and activates the transcription of hundreds of genes involved in immune response, growth control, or protection against apoptosis. Negatively regulates the pathway by phosphorylating the scaffold protein TAXBP1 and thus promoting the assembly of the A20/TNFAIP3 ubiquitin-editing complex (composed of A20/TNFAIP3, TAX1BP1, and the E3 ligases ITCH and RNF11). Therefore, CHUK plays a key role in the negative feedback of NF-kappa-B canonical signaling to limit inflammatory gene activation. As part of the non-canonical pathway of NF-kappa-B activation, the MAP3K14-activated CHUK/IKKA homodimer phosphorylates NFKB2/p100 associated with RelB, inducing its proteolytic processing to NFKB2/p52 and the formation of NF-kappa-B RelB-p52 complexes. In turn, these complexes regulate genes encoding molecules involved in B-cell survival and lymphoid organogenesis. Also participates in the negative feedback of the non-canonical NF-kappa-B signaling pathway by phosphorylating and destabilizing MAP3K14/NIK. Within the nucleus, phosphorylates CREBBP and consequently increases both its transcriptional and histone acetyltransferase activities. Modulates chromatin accessibility at NF-kappa-B-responsive promoters by phosphorylating histones H3 at 'Ser-10' that are subsequently acetylated at 'Lys-14' by CREBBP. Additionally, phosphorylates the CREBBP-interacting protein NCOA3. Also phosphorylates FOXO3 and may regulate this pro-apoptotic transcription factor. Phosphorylates RIPK1 at 'Ser-25' which represses its kinase activity and consequently prevents TNF-mediated RIPK1-dependent cell death. Phosphorylates AMBRA1 following mitophagy induction, promoting AMBRA1 interaction with ATG8 family proteins and its mitophagic activity. The chain is Inhibitor of nuclear factor kappa-B kinase subunit alpha (Chuk) from Mus musculus (Mouse).